The primary structure comprises 842 residues: Non-motile and phage-resistance protein (842 aa).

Transmembrane regions (helical) follow at residues 29 to 50, 283 to 303, and 343 to 363; these read VFVR…AFGV, GAFS…LLMI, and VYLS…VVSG. The 72-residue stretch at 318 to 389 folds into the PAS domain; that stretch reads SERRFRLAVE…QALANAAMYG (72 aa). Residues 607-830 form the Histidine kinase domain; it reads NMSHELRTPL…TVSFTLPVRH (224 aa). His610 bears the Phosphohistidine; by autocatalysis mark.

Its subcellular location is the cell membrane. It carries out the reaction ATP + protein L-histidine = ADP + protein N-phospho-L-histidine.. In terms of biological role, member of the two-component regulatory system involved in the regulation of polar organelle development. PleC functions as a membrane-associated protein kinase that transfers phosphate to the response regulator PleD, leading to its activation. This chain is Non-motile and phage-resistance protein (pleC), found in Caulobacter vibrioides (strain ATCC 19089 / CIP 103742 / CB 15) (Caulobacter crescentus).